Reading from the N-terminus, the 651-residue chain is Transcription termination factor FttA (651 aa).

The archaeal CPSF-KH domain stretch occupies residues 1–200 (MTFLIKRETQ…ITGLGGFREV (200 aa)). Positions 12-79 (DQILRDIRAV…ISVRPDPEVL (68 aa)) are KHa. The tract at residues 80-147 (LPPEEAEKLI…WAPKVVRTPP (68 aa)) is KHb. Positions 188–398 (WIRITGLGGF…LVMESTYGGA (211 aa)) are metallo-beta-lactamase N-terminus. The Zn(2+) site is built by His-256, His-258, Asp-260, His-261, His-344, and Asp-367. Residues 399 to 592 (NDIQMPREEA…MEVHTIDGFS (194 aa)) are beta-Casp. The segment at 593-651 (GHADRRELMNYVAKVRPRPERIITVHGEPQKCLDLATSIHRKFGISTRAPNNLDTIRLR) is metallo-beta-lactamase C-terminus. His-618 is a Zn(2+) binding site.

It belongs to the metallo-beta-lactamase superfamily. RNA-metabolizing metallo-beta-lactamase-like family. FttA subfamily. Homodimer. Interacts with RNA polymerase (RNAP), interacts with the Spt4-Spt5 complex. It depends on Zn(2+) as a cofactor.

Functionally, terminates transcription on the whole genome. Termination is linked to FttA-mediated RNA cleavage and does not require NTP hydrolysis. Cleaves endonucleolytically at the RNA exit channel of RNA polymerase (RNAP); the 5'-3' exonuclease activity of this protein degrades the nascent RNA released from RNAP. Has nuclease activity on single-stranded RNA. In Pyrococcus horikoshii (strain ATCC 700860 / DSM 12428 / JCM 9974 / NBRC 100139 / OT-3), this protein is Transcription termination factor FttA.